A 336-amino-acid polypeptide reads, in one-letter code: Monoacylglycerol lipase ABHD6 (336 aa).

The Extracellular segment spans residues 1-8 (MDLDVVNM). A helical; Signal-anchor for type II membrane protein transmembrane segment spans residues 9-29 (FVIAGGTLAIPILAFVASFLL). The Cytoplasmic portion of the chain corresponds to 30–336 (WPSALIRIYY…VHNTDNKKLN (307 aa)). Ser148 functions as the Nucleophile in the catalytic mechanism. Active-site charge relay system residues include Asp278 and His306.

This sequence belongs to the AB hydrolase superfamily. In terms of tissue distribution, widely expressed with higher expression in small intestine, liver and brown adipose tissue. In brain, expressed postsynaptically in cortical neurons but not detected in microglia (at protein level).

Its subcellular location is the late endosome membrane. The protein localises to the lysosome membrane. The protein resides in the mitochondrion membrane. It carries out the reaction Hydrolyzes glycerol monoesters of long-chain fatty acids.. It catalyses the reaction 2-(5Z,8Z,11Z,14Z-eicosatetraenoyl)-glycerol + H2O = glycerol + (5Z,8Z,11Z,14Z)-eicosatetraenoate + H(+). The enzyme catalyses 1-octanoylglycerol + H2O = octanoate + glycerol + H(+). The catalysed reaction is 1-decanoylglycerol + H2O = decanoate + glycerol + H(+). It carries out the reaction 1-dodecanoylglycerol + H2O = dodecanoate + glycerol + H(+). It catalyses the reaction 1-tetradecanoylglycerol + H2O = tetradecanoate + glycerol + H(+). The enzyme catalyses 2-hexadecanoylglycerol + H2O = glycerol + hexadecanoate + H(+). The catalysed reaction is 2-(9Z-octadecenoyl)-glycerol + H2O = glycerol + (9Z)-octadecenoate + H(+). It carries out the reaction 1-(9Z-octadecenoyl)-glycerol + H2O = glycerol + (9Z)-octadecenoate + H(+). It catalyses the reaction 2-(9Z,12Z-octadecadienoyl)-glycerol + H2O = (9Z,12Z)-octadecadienoate + glycerol + H(+). The enzyme catalyses 1-(5Z,8Z,11Z,14Z-eicosatetraenoyl)-glycerol + H2O = glycerol + (5Z,8Z,11Z,14Z)-eicosatetraenoate + H(+). The catalysed reaction is 1-(9Z,12Z-octadecadienoyl)-glycerol + H2O = (9Z,12Z)-octadecadienoate + glycerol + H(+). It carries out the reaction 3-(9Z-octadecenoyl)-sn-glycero-1-phospho-(3'-(9Z-octadecenoyl)-1'-sn-glycerol) + H2O = 3-(9Z-octadecenoyl)-sn-glycero-1-phospho-(1'-sn-glycerol) + (9Z)-octadecenoate + H(+). It catalyses the reaction (S,S)-2-(9Z-octadecenoyl)-sn-glycero-1-phospho-(2'-(9Z-octadecenoyl)-1'-sn-glycerol) + H2O = (S,S)-2-(9Z-octadecenoyl)-sn-glycero-1-phospho-(1'-sn-glycerol) + (9Z)-octadecenoate + H(+). The enzyme catalyses (R,R)-2-(9Z-octadecenoyl)-sn-glycero-3-phospho-(2'-(9Z-octadecenoyl)-3'-sn-glycerol) + H2O = (R,R)-2-(9Z-octadecenoyl)-sn-glycero-3-phospho-(3'-sn-glycerol) + (9Z)-octadecenoate + H(+). Lipase that preferentially hydrolysis medium-chain saturated monoacylglycerols including 2-arachidonoylglycerol. Through 2-arachidonoylglycerol degradation may regulate endocannabinoid signaling pathways. Also has a lysophosphatidyl lipase activity with a preference for lysophosphatidylglycerol among other lysophospholipids. Also able to degrade bis(monoacylglycero)phosphate (BMP) and constitutes the major enzyme for BMP catabolism. BMP, also known as lysobisphosphatidic acid, is enriched in late endosomes and lysosomes and plays a key role in the formation of intraluminal vesicles and in lipid sorting. This Mus musculus (Mouse) protein is Monoacylglycerol lipase ABHD6.